Consider the following 329-residue polypeptide: Putative glucose ABC transporter permease protein TsgC13 (329 aa).

A run of 7 helical transmembrane segments spans residues 3–23 (FAAG…LAGL), 32–52 (GVLN…GFVV), 60–80 (WLGF…HAFL), 89–109 (VISG…FGSG), 139–161 (AFFR…WFFL), 193–213 (LAVI…SLAF), and 216–236 (LWVP…VVFA).

The protein belongs to the binding-protein-dependent transport system permease family. As to quaternary structure, the complex is composed of two ATP-binding proteins (TsgD13), two transmembrane proteins (TsgB13 and TsgC13) and a solute-binding protein (TsgA13).

Its subcellular location is the cell membrane. Functionally, part of an ABC transporter complex involved in glucose import (Potential). Responsible for the translocation of the substrate across the membrane. The chain is Putative glucose ABC transporter permease protein TsgC13 (tsgC13) from Haloferax volcanii (strain ATCC 29605 / DSM 3757 / JCM 8879 / NBRC 14742 / NCIMB 2012 / VKM B-1768 / DS2) (Halobacterium volcanii).